Consider the following 353-residue polypeptide: Guanine nucleotide-binding protein G(q) subunit alpha (353 aa).

Residues C3 and C4 are each lipidated (S-palmitoyl cysteine). The G-alpha domain maps to 32-353 (RELKLLLLGT…QLNLKEYNLV (322 aa)). Residues 35–48 (KLLLLGTGESGKST) are G1 motif. Residues 40–47 (GTGESGKS), 174–180 (LRVRVPT), 199–203 (DVGGQ), 268–271 (NKKD), and A325 contribute to the GTP site. S47 and T180 together coordinate Mg(2+). The tract at residues 172-180 (DILRVRVPT) is G2 motif. Positions 195 to 204 (FRMVDVGGQR) are G3 motif. The tract at residues 264–271 (ILFLNKKD) is G4 motif. Positions 323–328 (TCATDT) are G5 motif.

The protein belongs to the G-alpha family. G(q) subfamily. As to quaternary structure, g proteins are composed of 3 units; alpha, beta and gamma. The alpha chain contains the guanine nucleotide binding site.

Guanine nucleotide-binding proteins (G proteins) are involved as modulators or transducers in various transmembrane signaling systems. The sequence is that of Guanine nucleotide-binding protein G(q) subunit alpha from Lymnaea stagnalis (Great pond snail).